The following is a 291-amino-acid chain: 4-diphosphocytidyl-2-C-methyl-D-erythritol kinase (291 aa).

Residue lysine 21 is part of the active site. 104-114 is a binding site for ATP; that stretch reads PMGGGLGGGSS. Aspartate 146 is a catalytic residue.

This sequence belongs to the GHMP kinase family. IspE subfamily.

The catalysed reaction is 4-CDP-2-C-methyl-D-erythritol + ATP = 4-CDP-2-C-methyl-D-erythritol 2-phosphate + ADP + H(+). Its pathway is isoprenoid biosynthesis; isopentenyl diphosphate biosynthesis via DXP pathway; isopentenyl diphosphate from 1-deoxy-D-xylulose 5-phosphate: step 3/6. Its function is as follows. Catalyzes the phosphorylation of the position 2 hydroxy group of 4-diphosphocytidyl-2C-methyl-D-erythritol. This chain is 4-diphosphocytidyl-2-C-methyl-D-erythritol kinase, found in Methylococcus capsulatus (strain ATCC 33009 / NCIMB 11132 / Bath).